We begin with the raw amino-acid sequence, 481 residues long: Cysteine--tRNA ligase (481 aa).

Zn(2+) is bound at residue C27. The 'HIGH' region signature appears at 29-39 (PTVYNYAHIGN). The Zn(2+) site is built by C222, H247, and E251. Residues 279-283 (KMSKS) carry the 'KMSKS' region motif. ATP is bound at residue K282.

Belongs to the class-I aminoacyl-tRNA synthetase family. In terms of assembly, monomer. It depends on Zn(2+) as a cofactor.

The protein localises to the cytoplasm. The catalysed reaction is tRNA(Cys) + L-cysteine + ATP = L-cysteinyl-tRNA(Cys) + AMP + diphosphate. This chain is Cysteine--tRNA ligase, found in Borrelia turicatae (strain 91E135).